The chain runs to 713 residues: Polyribonucleotide nucleotidyltransferase (713 aa).

The Mg(2+) site is built by D485 and D491. Positions 552–611 (PRIYTMKIDPKKIKDVIGKGGATVRSLTEETGTSIDIDDDGTVKIAAVDKNAVQEVMSRI) constitute a KH domain. The S1 motif domain occupies 621–689 (GVVYKGKVTR…RQGRIRLTMK (69 aa)). Residues 694–713 (DQTKNEENLLQSEEGSPVQE) form a disordered region. Residues 701–713 (NLLQSEEGSPVQE) show a composition bias toward polar residues.

The protein belongs to the polyribonucleotide nucleotidyltransferase family. In terms of assembly, component of the RNA degradosome, which is a multiprotein complex involved in RNA processing and mRNA degradation. Requires Mg(2+) as cofactor.

It is found in the cytoplasm. It catalyses the reaction RNA(n+1) + phosphate = RNA(n) + a ribonucleoside 5'-diphosphate. Its function is as follows. Involved in mRNA degradation. Catalyzes the phosphorolysis of single-stranded polyribonucleotides processively in the 3'- to 5'-direction. The polypeptide is Polyribonucleotide nucleotidyltransferase (Histophilus somni (strain 2336) (Haemophilus somnus)).